Consider the following 77-residue polypeptide: Large ribosomal subunit protein eL20 (77 aa).

It belongs to the eukaryotic ribosomal protein eL20 family. Part of the 50S ribosomal subunit. Binds 23S rRNA.

The polypeptide is Large ribosomal subunit protein eL20 (Pyrococcus abyssi (strain GE5 / Orsay)).